A 414-amino-acid chain; its full sequence is DNA polymerase IV 1 (414 aa).

Positions 8–189 (IFHIDMNSFY…LPVGEMHGVG (182 aa)) constitute a UmuC domain. Mg(2+)-binding residues include D12 and D108. The active site involves E109. The segment at 391–414 (LKKEESKTKGTSFNKDFFQDEKKS) is disordered.

Belongs to the DNA polymerase type-Y family. In terms of assembly, monomer. It depends on Mg(2+) as a cofactor.

It localises to the cytoplasm. The enzyme catalyses DNA(n) + a 2'-deoxyribonucleoside 5'-triphosphate = DNA(n+1) + diphosphate. In terms of biological role, poorly processive, error-prone DNA polymerase involved in untargeted mutagenesis. Copies undamaged DNA at stalled replication forks, which arise in vivo from mismatched or misaligned primer ends. These misaligned primers can be extended by PolIV. Exhibits no 3'-5' exonuclease (proofreading) activity. May be involved in translesion synthesis (TSL), in conjunction with the beta clamp from PolIII. In Bacillus subtilis (strain 168), this protein is DNA polymerase IV 1 (dinB1).